Consider the following 304-residue polypeptide: UDP-3-O-acyl-N-acetylglucosamine deacetylase (304 aa).

Positions 78, 237, and 241 each coordinate Zn(2+). H264 acts as the Proton donor in catalysis.

The protein belongs to the LpxC family. The cofactor is Zn(2+).

The catalysed reaction is a UDP-3-O-[(3R)-3-hydroxyacyl]-N-acetyl-alpha-D-glucosamine + H2O = a UDP-3-O-[(3R)-3-hydroxyacyl]-alpha-D-glucosamine + acetate. It functions in the pathway glycolipid biosynthesis; lipid IV(A) biosynthesis; lipid IV(A) from (3R)-3-hydroxytetradecanoyl-[acyl-carrier-protein] and UDP-N-acetyl-alpha-D-glucosamine: step 2/6. Its function is as follows. Catalyzes the hydrolysis of UDP-3-O-myristoyl-N-acetylglucosamine to form UDP-3-O-myristoylglucosamine and acetate, the committed step in lipid A biosynthesis. In Acidithiobacillus ferrooxidans (strain ATCC 53993 / BNL-5-31) (Leptospirillum ferrooxidans (ATCC 53993)), this protein is UDP-3-O-acyl-N-acetylglucosamine deacetylase.